The following is a 218-amino-acid chain: MSSLALKIGSLLVRTLSKPIANTIKAQAKEHKAFRKACIEFAQWMHRAEFRITGINRAKSGGANVRLRPLNDAKAVDAGATFLSETFIFTVAGGAILFETWRARRKEKNRRDEVAEAILGLQHEIVRINEIMEKQFVLQKKKNELQSSTEEIDSTEKDFDELHKVILKVERELHTLRQNTPSQNEQAEATPSKEIPRETVSEKADHPPSSNTKSVSTG.

Residues 129–179 (NEIMEKQFVLQKKKNELQSSTEEIDSTEKDFDELHKVILKVERELHTLRQN) adopt a coiled-coil conformation. Residues 175–218 (TLRQNTPSQNEQAEATPSKEIPRETVSEKADHPPSSNTKSVSTG) are disordered. Over residues 176–189 (LRQNTPSQNEQAEA) the composition is skewed to polar residues. Basic and acidic residues predominate over residues 194-206 (EIPRETVSEKADH). The segment covering 208-218 (PSSNTKSVSTG) has biased composition (polar residues).

This sequence belongs to the OPA3 family.

The sequence is that of OPA3-like protein from Schizosaccharomyces pombe (strain 972 / ATCC 24843) (Fission yeast).